Here is a 632-residue protein sequence, read N- to C-terminus: tRNA uridine 5-carboxymethylaminomethyl modification enzyme MnmG (632 aa).

Residues 13 to 18 (GGGHAG), valine 125, and serine 180 contribute to the FAD site. Position 273-287 (273-287 (GPRYCPSIEDKVVRF)) interacts with NAD(+). Glutamine 370 provides a ligand contact to FAD.

Belongs to the MnmG family. Homodimer. Heterotetramer of two MnmE and two MnmG subunits. FAD serves as cofactor.

The protein localises to the cytoplasm. NAD-binding protein involved in the addition of a carboxymethylaminomethyl (cmnm) group at the wobble position (U34) of certain tRNAs, forming tRNA-cmnm(5)s(2)U34. The chain is tRNA uridine 5-carboxymethylaminomethyl modification enzyme MnmG from Nitrosospira multiformis (strain ATCC 25196 / NCIMB 11849 / C 71).